The chain runs to 661 residues: UvrABC system protein C (661 aa).

Positions 26-105 (AEPGCYLMRD…IKNHQPHFNV (80 aa)) constitute a GIY-YIG domain. A UVR domain is found at 215–250 (DELQNLLQEQMHKYADRTDYESAARVRDQLQGLDQL).

This sequence belongs to the UvrC family. Interacts with UvrB in an incision complex.

It is found in the cytoplasm. The UvrABC repair system catalyzes the recognition and processing of DNA lesions. UvrC both incises the 5' and 3' sides of the lesion. The N-terminal half is responsible for the 3' incision and the C-terminal half is responsible for the 5' incision. The polypeptide is UvrABC system protein C (Synechococcus sp. (strain CC9902)).